A 153-amino-acid polypeptide reads, in one-letter code: Transcriptional repressor NrdR (153 aa).

A zinc finger spans residues 3 to 34 (CPFCNHLHDKVVDSRESKEGDAIRRRRECLEC). The ATP-cone domain occupies 49-139 (YMVVKKDGRR…VYRDFQDEQA (91 aa)).

Belongs to the NrdR family. It depends on Zn(2+) as a cofactor.

In terms of biological role, negatively regulates transcription of bacterial ribonucleotide reductase nrd genes and operons by binding to NrdR-boxes. The polypeptide is Transcriptional repressor NrdR (Solibacter usitatus (strain Ellin6076)).